Consider the following 111-residue polypeptide: 2Fe-2S ferredoxin (111 aa).

The 2Fe-2S ferredoxin-type domain occupies 5–107; sequence IKVTFVINNG…GIKVRLPSAT (103 aa). [2Fe-2S] cluster-binding residues include Cys-42, Cys-48, Cys-51, and Cys-88.

This sequence belongs to the adrenodoxin/putidaredoxin family. [2Fe-2S] cluster is required as a cofactor.

Its function is as follows. Ferredoxin are iron-sulfur proteins that transfer electrons in a wide variety of metabolic reactions. The sequence is that of 2Fe-2S ferredoxin (fdxB) from Rickettsia bellii (strain RML369-C).